The chain runs to 557 residues: Laccase-11 (557 aa).

The signal sequence occupies residues 1 to 23; sequence MKMGFLFLFCYLLAFLGYSPVDA. 2 consecutive Plastocyanin-like domains span residues 31 to 147 and 158 to 308; these read DVQV…PAPG and ESNI…YKGV. N36, N69, and N77 each carry an N-linked (GlcNAc...) asparagine glycan. 2 residues coordinate Cu cation: H81 and H83. The N-linked (GlcNAc...) asparagine glycan is linked to N115. Positions 126 and 128 each coordinate Cu cation. 8 N-linked (GlcNAc...) asparagine glycosylation sites follow: N240, N296, N323, N371, N381, N398, N416, and N440. Positions 406–541 constitute a Plastocyanin-like 3 domain; it reads DFPDRPPKAF…KMAFVVENGE (136 aa). The Cu cation site is built by H458, H461, H463, H520, C521, H522, and H526.

The protein belongs to the multicopper oxidase family. The cofactor is Cu cation. In terms of tissue distribution, ubiquitous and constitutive.

Its subcellular location is the secreted. The protein resides in the extracellular space. It is found in the apoplast. It catalyses the reaction 4 hydroquinone + O2 = 4 benzosemiquinone + 2 H2O. Lignin degradation and detoxification of lignin-derived products. This Arabidopsis thaliana (Mouse-ear cress) protein is Laccase-11 (LAC11).